A 134-amino-acid chain; its full sequence is Small ribosomal subunit protein uS8c (134 aa).

It belongs to the universal ribosomal protein uS8 family. As to quaternary structure, part of the 30S ribosomal subunit.

It localises to the plastid. Its subcellular location is the chloroplast. One of the primary rRNA binding proteins, it binds directly to 16S rRNA central domain where it helps coordinate assembly of the platform of the 30S subunit. This chain is Small ribosomal subunit protein uS8c (rps8), found in Aethionema cordifolium (Lebanon stonecress).